Reading from the N-terminus, the 259-residue chain is Aspartate/glutamate leucyltransferase (259 aa).

The protein belongs to the R-transferase family. Bpt subfamily.

The protein localises to the cytoplasm. It catalyses the reaction N-terminal L-glutamyl-[protein] + L-leucyl-tRNA(Leu) = N-terminal L-leucyl-L-glutamyl-[protein] + tRNA(Leu) + H(+). The enzyme catalyses N-terminal L-aspartyl-[protein] + L-leucyl-tRNA(Leu) = N-terminal L-leucyl-L-aspartyl-[protein] + tRNA(Leu) + H(+). Functionally, functions in the N-end rule pathway of protein degradation where it conjugates Leu from its aminoacyl-tRNA to the N-termini of proteins containing an N-terminal aspartate or glutamate. This Rhizobium meliloti (strain 1021) (Ensifer meliloti) protein is Aspartate/glutamate leucyltransferase.